A 479-amino-acid polypeptide reads, in one-letter code: Putative F-box/LRR-repeat protein At1g56400 (479 aa).

Residues 12 to 60 enclose the F-box domain; it reads QDRLSNLPDVLLIMIISCLSFKECIRTSVLAKRWRYLCRETRNISFKET. LRR repeat units follow at residues 99–129, 139–167, 186–211, 228–254, 287–312, 342–367, and 419–446; these read YFSIPSDFLAAVESLIEFAVSRQVKNLVLDF, CASRYDYVCVQLPVCVYSLTTLESLKIYS, IGWIKLTDVESLLLNSPTLKSLSINY, VFESCDFSSFMVCCFDLPNVEIFKYSG, RTKLEGSVLSAFLNNLRGARTLSVCP, LHVMEFKGIKLLLDNCPNLETLTFDI, and LKFLIQSGRGRWPGREHGPMLERVELYM.

In Arabidopsis thaliana (Mouse-ear cress), this protein is Putative F-box/LRR-repeat protein At1g56400.